A 404-amino-acid chain; its full sequence is F-box only protein 12 (404 aa).

The region spanning 1–44 (MKNSIPIDLIYEILSRLPAKSVARCRCVSKRWRSILRHQVFTEL) is the F-box domain. A helical membrane pass occupies residues 383–403 (LAILFCLFFLLFNYLIRLCWV).

It localises to the membrane. The chain is F-box only protein 12 (FBX12) from Arabidopsis thaliana (Mouse-ear cress).